Consider the following 259-residue polypeptide: MLSKRVIPCLDVRNGRLTKGVKFVGNEDIGDPVESARRYYEEGADEIVFYDITASAEARGIFLDVVERVAEQIFIPFSVGGGISSVADMRAVLLAGAEKVSINSAAVKNPRLIGDGADAFGSQAVVVGMDVLAVPESPEIPSGYEIVIHGGRKRMGLDAIAWARCCQELGAGELCVNSIDADGTKDGYELKLTRAIADAVSLPVIASGGAGEPRHMLEAVTGGGASAALIASIVHYGQYSIRQCKEYMAAHGARMRLTW.

Residues Asp-11 and Asp-130 contribute to the active site.

It belongs to the HisA/HisF family. Heterodimer of HisH and HisF.

It is found in the cytoplasm. The enzyme catalyses 5-[(5-phospho-1-deoxy-D-ribulos-1-ylimino)methylamino]-1-(5-phospho-beta-D-ribosyl)imidazole-4-carboxamide + L-glutamine = D-erythro-1-(imidazol-4-yl)glycerol 3-phosphate + 5-amino-1-(5-phospho-beta-D-ribosyl)imidazole-4-carboxamide + L-glutamate + H(+). The protein operates within amino-acid biosynthesis; L-histidine biosynthesis; L-histidine from 5-phospho-alpha-D-ribose 1-diphosphate: step 5/9. In terms of biological role, IGPS catalyzes the conversion of PRFAR and glutamine to IGP, AICAR and glutamate. The HisF subunit catalyzes the cyclization activity that produces IGP and AICAR from PRFAR using the ammonia provided by the HisH subunit. This is Imidazole glycerol phosphate synthase subunit HisF from Desulfovibrio desulfuricans (strain ATCC 27774 / DSM 6949 / MB).